Here is a 213-residue protein sequence, read N- to C-terminus: Large ribosomal subunit protein uL3 (213 aa).

The segment at alanine 122 to glycine 147 is disordered.

Belongs to the universal ribosomal protein uL3 family. In terms of assembly, part of the 50S ribosomal subunit. Forms a cluster with proteins L14 and L19.

Its function is as follows. One of the primary rRNA binding proteins, it binds directly near the 3'-end of the 23S rRNA, where it nucleates assembly of the 50S subunit. This Geobacillus stearothermophilus (Bacillus stearothermophilus) protein is Large ribosomal subunit protein uL3.